Reading from the N-terminus, the 195-residue chain is ATP-dependent Clp protease proteolytic subunit 2 (195 aa).

Ser-98 (nucleophile) is an active-site residue. His-123 is a catalytic residue.

The protein belongs to the peptidase S14 family. Fourteen ClpP subunits assemble into 2 heptameric rings which stack back to back to give a disk-like structure with a central cavity, resembling the structure of eukaryotic proteasomes.

It localises to the cytoplasm. It carries out the reaction Hydrolysis of proteins to small peptides in the presence of ATP and magnesium. alpha-casein is the usual test substrate. In the absence of ATP, only oligopeptides shorter than five residues are hydrolyzed (such as succinyl-Leu-Tyr-|-NHMec, and Leu-Tyr-Leu-|-Tyr-Trp, in which cleavage of the -Tyr-|-Leu- and -Tyr-|-Trp bonds also occurs).. Functionally, cleaves peptides in various proteins in a process that requires ATP hydrolysis. Has a chymotrypsin-like activity. Plays a major role in the degradation of misfolded proteins. This chain is ATP-dependent Clp protease proteolytic subunit 2, found in Rhodopirellula baltica (strain DSM 10527 / NCIMB 13988 / SH1).